A 384-amino-acid polypeptide reads, in one-letter code: Probable L-tyrosine/L-aspartate decarboxylase (384 aa).

The residue at position 233 (Lys233) is an N6-(pyridoxal phosphate)lysine.

Belongs to the group II decarboxylase family. MfnA subfamily. Requires pyridoxal 5'-phosphate as cofactor.

The enzyme catalyses L-tyrosine + H(+) = tyramine + CO2. The catalysed reaction is L-aspartate + H(+) = beta-alanine + CO2. It participates in cofactor biosynthesis; methanofuran biosynthesis. Its pathway is cofactor biosynthesis; coenzyme A biosynthesis. Its function is as follows. Catalyzes the decarboxylation of L-tyrosine to produce tyramine for methanofuran biosynthesis. Can also catalyze the decarboxylation of L-aspartate to produce beta-alanine for coenzyme A (CoA) biosynthesis. This Methanococcus maripaludis (strain C5 / ATCC BAA-1333) protein is Probable L-tyrosine/L-aspartate decarboxylase.